The chain runs to 354 residues: DNA polymerase IV (354 aa).

The region spanning 8–189 (IIHIDMDCFY…LPLQKIPGVG (182 aa)) is the UmuC domain. Residues D12 and D107 each contribute to the Mg(2+) site. E108 is a catalytic residue.

This sequence belongs to the DNA polymerase type-Y family. In terms of assembly, monomer. Mg(2+) is required as a cofactor.

The protein resides in the cytoplasm. It carries out the reaction DNA(n) + a 2'-deoxyribonucleoside 5'-triphosphate = DNA(n+1) + diphosphate. Poorly processive, error-prone DNA polymerase involved in untargeted mutagenesis. Copies undamaged DNA at stalled replication forks, which arise in vivo from mismatched or misaligned primer ends. These misaligned primers can be extended by PolIV. Exhibits no 3'-5' exonuclease (proofreading) activity. May be involved in translesional synthesis, in conjunction with the beta clamp from PolIII. In Vibrio vulnificus (strain CMCP6), this protein is DNA polymerase IV.